The following is a 286-amino-acid chain: Bifunctional protein FolD 2 (286 aa).

NADP(+) contacts are provided by residues 165–167 (GRG), T192, and I233.

It belongs to the tetrahydrofolate dehydrogenase/cyclohydrolase family. In terms of assembly, homodimer.

The catalysed reaction is (6R)-5,10-methylene-5,6,7,8-tetrahydrofolate + NADP(+) = (6R)-5,10-methenyltetrahydrofolate + NADPH. The enzyme catalyses (6R)-5,10-methenyltetrahydrofolate + H2O = (6R)-10-formyltetrahydrofolate + H(+). It functions in the pathway one-carbon metabolism; tetrahydrofolate interconversion. Its function is as follows. Catalyzes the oxidation of 5,10-methylenetetrahydrofolate to 5,10-methenyltetrahydrofolate and then the hydrolysis of 5,10-methenyltetrahydrofolate to 10-formyltetrahydrofolate. The sequence is that of Bifunctional protein FolD 2 from Salinispora tropica (strain ATCC BAA-916 / DSM 44818 / JCM 13857 / NBRC 105044 / CNB-440).